The primary structure comprises 355 residues: UDP-N-acetylglucosamine--N-acetylmuramyl-(pentapeptide) pyrophosphoryl-undecaprenol N-acetylglucosamine transferase (355 aa).

UDP-N-acetyl-alpha-D-glucosamine-binding positions include 14–16 (SGG), asparagine 126, arginine 162, serine 190, isoleucine 243, 262–267 (ALTVSE), and glutamine 288.

It belongs to the glycosyltransferase 28 family. MurG subfamily.

The protein resides in the cell inner membrane. The catalysed reaction is di-trans,octa-cis-undecaprenyl diphospho-N-acetyl-alpha-D-muramoyl-L-alanyl-D-glutamyl-meso-2,6-diaminopimeloyl-D-alanyl-D-alanine + UDP-N-acetyl-alpha-D-glucosamine = di-trans,octa-cis-undecaprenyl diphospho-[N-acetyl-alpha-D-glucosaminyl-(1-&gt;4)]-N-acetyl-alpha-D-muramoyl-L-alanyl-D-glutamyl-meso-2,6-diaminopimeloyl-D-alanyl-D-alanine + UDP + H(+). The protein operates within cell wall biogenesis; peptidoglycan biosynthesis. Cell wall formation. Catalyzes the transfer of a GlcNAc subunit on undecaprenyl-pyrophosphoryl-MurNAc-pentapeptide (lipid intermediate I) to form undecaprenyl-pyrophosphoryl-MurNAc-(pentapeptide)GlcNAc (lipid intermediate II). This is UDP-N-acetylglucosamine--N-acetylmuramyl-(pentapeptide) pyrophosphoryl-undecaprenol N-acetylglucosamine transferase from Blochmanniella pennsylvanica (strain BPEN).